We begin with the raw amino-acid sequence, 83 residues long: Three-finger toxin MALT0066C (83 aa).

Positions 1 to 21 (MKTLLLTLVVVTIVCLDFGHT) are cleaved as a signal peptide. Intrachain disulfides connect cysteine 24-cysteine 45, cysteine 38-cysteine 62, cysteine 64-cysteine 75, and cysteine 76-cysteine 81.

Belongs to the three-finger toxin family. Short-chain subfamily. Type I alpha-neurotoxin sub-subfamily. Dimer. In terms of tissue distribution, expressed by the venom gland.

The protein resides in the secreted. Binds to muscle nicotinic acetylcholine receptor (nAChR) and inhibit acetylcholine from binding to the receptor, thereby impairing neuromuscular transmission. The protein is Three-finger toxin MALT0066C of Micrurus altirostris (Uruguayan coral snake).